The following is a 63-amino-acid chain: Large ribosomal subunit protein bL28 (63 aa).

It belongs to the bacterial ribosomal protein bL28 family.

The polypeptide is Large ribosomal subunit protein bL28 (Sulfurihydrogenibium sp. (strain YO3AOP1)).